A 35-amino-acid chain; its full sequence is Cecropin-B (35 aa).

Position 35 is a leucine amide (leucine 35).

The protein belongs to the cecropin family.

The protein resides in the secreted. Cecropins have lytic and antibacterial activity against several Gram-positive and Gram-negative bacteria. This Antheraea pernyi (Chinese oak silk moth) protein is Cecropin-B.